The sequence spans 610 residues: Zinc metalloproteinase-disintegrin-like bothropasin (610 aa).

Residues 1–20 (MIEVLLVTICLAAFPYQGSS) form the signal peptide. Positions 21–191 (IILESGNVND…ASQLVVTAEQ (171 aa)) are excised as a propeptide. Gln192 is subject to Pyrrolidone carboxylic acid. One can recognise a Peptidase M12B domain in the interval 198–394 (RYVELFIVVD…ENPQCILNEP (197 aa)). Ca(2+) contacts are provided by Glu201 and Asp285. 3 disulfide bridges follow: Cys309–Cys389, Cys349–Cys373, and Cys351–Cys356. His334 is a Zn(2+) binding site. Glu335 is an active-site residue. Zn(2+) is bound by residues His338 and His344. N-linked (GlcNAc...) asparagine glycosylation is present at Asn372. Residues Cys389, Asn392, Val404, Asn407, Leu409, Glu411, Glu414, and Asp417 each contribute to the Ca(2+) site. The 87-residue stretch at 402–488 (PPVCGNELLE…ECPADVFHKN (87 aa)) folds into the Disintegrin domain. Disulfide bonds link Cys405-Cys424, Cys405-Cys434, Cys416-Cys429, Cys416-Cys434, Cys418-Cys424, Cys428-Cys451, Cys442-Cys448, Cys447-Cys473, Cys460-Cys480, Cys467-Cys492, Cys467-Cys499, Cys492-Cys504, Cys499-Cys504, Cys511-Cys526, Cys511-Cys561, Cys526-Cys572, Cys539-Cys549, Cys549-Cys556, Cys556-Cys598, Cys561-Cys572, Cys592-Cys603, and Cys598-Cys603. The D/ECD-tripeptide motif lies at 466–468 (ECD). Asp468, Pro469, Glu471, Asp483, and Val484 together coordinate Ca(2+).

The protein belongs to the venom metalloproteinase (M12B) family. P-III subfamily. P-IIIb sub-subfamily. As to quaternary structure, monomer. Zn(2+) is required as a cofactor. In terms of tissue distribution, expressed by the venom gland.

The protein resides in the secreted. It catalyses the reaction Cleavage of 5-His-|-Leu-6, 10-His-|-Leu-11, 14-Ala-|-Leu-15, 16-Tyr-|-Leu-17 and 24-Phe-|-Phe-25 in insulin B chain.. Inhibited by EDTA and EGTA. Functionally, has caseinolytic activity. Causes hemorrhage on rabbit skin and causes myonecrosis in mouse tibialis anterior muscle. Inhibits platelet aggregation. This is Zinc metalloproteinase-disintegrin-like bothropasin from Bothrops jararaca (Jararaca).